The following is a 123-amino-acid chain: Glutaredoxin-like protein (123 aa).

The region spanning 27 to 123 (INEVEESITN…GTLFNDLKKK (97 aa)) is the Glutaredoxin domain.

Belongs to the glutaredoxin family.

In Dictyostelium discoideum (Social amoeba), this protein is Glutaredoxin-like protein (grxB).